The chain runs to 400 residues: Phosphoglycerate kinase (400 aa).

Residues 21–23 (DFN), arginine 36, 59–62 (HLGR), arginine 118, and arginine 151 each bind substrate. Residues lysine 201, glycine 293, glutamate 324, and 353–356 (GGDS) each bind ATP.

This sequence belongs to the phosphoglycerate kinase family. As to quaternary structure, monomer.

The protein resides in the cytoplasm. It catalyses the reaction (2R)-3-phosphoglycerate + ATP = (2R)-3-phospho-glyceroyl phosphate + ADP. The protein operates within carbohydrate degradation; glycolysis; pyruvate from D-glyceraldehyde 3-phosphate: step 2/5. The polypeptide is Phosphoglycerate kinase (Fervidobacterium nodosum (strain ATCC 35602 / DSM 5306 / Rt17-B1)).